The sequence spans 423 residues: 3-phosphoshikimate 1-carboxyvinyltransferase (423 aa).

Positions 28, 29, and 33 each coordinate 3-phosphoshikimate. A phosphoenolpyruvate-binding site is contributed by Lys-28. 2 residues coordinate phosphoenolpyruvate: Gly-96 and Arg-124. Residues Ser-169, Ser-170, Gln-171, Ser-198, Glu-312, and His-339 each contribute to the 3-phosphoshikimate site. Gln-171 contributes to the phosphoenolpyruvate binding site. The Proton acceptor role is filled by Glu-312. Phosphoenolpyruvate-binding residues include Arg-343, Arg-384, and Lys-409.

Belongs to the EPSP synthase family. Monomer.

The protein localises to the cytoplasm. It carries out the reaction 3-phosphoshikimate + phosphoenolpyruvate = 5-O-(1-carboxyvinyl)-3-phosphoshikimate + phosphate. The protein operates within metabolic intermediate biosynthesis; chorismate biosynthesis; chorismate from D-erythrose 4-phosphate and phosphoenolpyruvate: step 6/7. Its function is as follows. Catalyzes the transfer of the enolpyruvyl moiety of phosphoenolpyruvate (PEP) to the 5-hydroxyl of shikimate-3-phosphate (S3P) to produce enolpyruvyl shikimate-3-phosphate and inorganic phosphate. The polypeptide is 3-phosphoshikimate 1-carboxyvinyltransferase (Acidothermus cellulolyticus (strain ATCC 43068 / DSM 8971 / 11B)).